Here is a 96-residue protein sequence, read N- to C-terminus: Guanyl-specific ribonuclease Sa (96 aa).

The cysteines at positions 7 and 96 are disulfide-linked. Glu-54 serves as the catalytic Proton acceptor. His-85 serves as the catalytic Proton donor.

This sequence belongs to the ribonuclease N1/T1 family.

It localises to the secreted. The enzyme catalyses [RNA] containing guanosine + H2O = an [RNA fragment]-3'-guanosine-3'-phosphate + a 5'-hydroxy-ribonucleotide-3'-[RNA fragment].. The protein is Guanyl-specific ribonuclease Sa (rnaSA) of Kitasatospora aureofaciens (Streptomyces aureofaciens).